The chain runs to 139 residues: Acyl carrier protein 5, chloroplastic (139 aa).

Residues 1-54 (MATSFCSSISMQAPFSATTTRFCLNKQATIFNNEKTNNLSFSLRRLMPARLAVS) constitute a chloroplast transit peptide. One can recognise a Carrier domain in the interval 59–134 (QETVEKVSEI…QAAELIEELV (76 aa)). O-(pantetheine 4'-phosphoryl)serine is present on serine 94.

It belongs to the acyl carrier protein (ACP) family. 4'-phosphopantetheine is transferred from CoA to a specific serine of apo-ACP by acpS. This modification is essential for activity because fatty acids are bound in thioester linkage to the sulfhydryl of the prosthetic group.

The protein resides in the plastid. The protein localises to the chloroplast. Functionally, carrier of the growing fatty acid chain in fatty acid biosynthesis. This is Acyl carrier protein 5, chloroplastic (ACP5) from Arabidopsis thaliana (Mouse-ear cress).